Here is a 281-residue protein sequence, read N- to C-terminus: Probable endonuclease 4 (281 aa).

Zn(2+)-binding residues include H69, H109, E145, D179, H182, H216, D229, H231, and E261.

The protein belongs to the AP endonuclease 2 family. Zn(2+) is required as a cofactor.

It carries out the reaction Endonucleolytic cleavage to 5'-phosphooligonucleotide end-products.. Functionally, endonuclease IV plays a role in DNA repair. It cleaves phosphodiester bonds at apurinic or apyrimidinic (AP) sites, generating a 3'-hydroxyl group and a 5'-terminal sugar phosphate. In Aeromonas salmonicida (strain A449), this protein is Probable endonuclease 4.